The following is a 485-amino-acid chain: Glutamyl-tRNA(Gln) amidotransferase subunit A (485 aa).

Residues K74 and S149 each act as charge relay system in the active site. The Acyl-ester intermediate role is filled by S173.

Belongs to the amidase family. GatA subfamily. As to quaternary structure, heterotrimer of A, B and C subunits.

The enzyme catalyses L-glutamyl-tRNA(Gln) + L-glutamine + ATP + H2O = L-glutaminyl-tRNA(Gln) + L-glutamate + ADP + phosphate + H(+). Functionally, allows the formation of correctly charged Gln-tRNA(Gln) through the transamidation of misacylated Glu-tRNA(Gln) in organisms which lack glutaminyl-tRNA synthetase. The reaction takes place in the presence of glutamine and ATP through an activated gamma-phospho-Glu-tRNA(Gln). This Synechococcus sp. (strain RCC307) protein is Glutamyl-tRNA(Gln) amidotransferase subunit A.